Here is a 291-residue protein sequence, read N- to C-terminus: Probable cell wall amidase LytH (291 aa).

The signal sequence occupies residues 1–40; that stretch reads MKKIDSWLTKHGLKNRLTLVVIVIFIIFLILLFMFVNLSD. An SH3b domain is found at 41-105; the sequence is EDTGQITITE…WVAGWHTNLN (65 aa). The MurNAc-LAA domain occupies 122–286; the sequence is IVLDPGHGGS…VEQAIVDGLK (165 aa). Residues 123-147 are disordered; the sequence is VLDPGHGGSDQGASSSTPSKSLEKN. Polar residues predominate over residues 133–142; the sequence is QGASSSTPSK.

It belongs to the N-acetylmuramoyl-L-alanine amidase 3 family.

Its subcellular location is the secreted. Probably involved in cell-wall metabolism. In Staphylococcus epidermidis (strain ATCC 35984 / DSM 28319 / BCRC 17069 / CCUG 31568 / BM 3577 / RP62A), this protein is Probable cell wall amidase LytH (lytH).